We begin with the raw amino-acid sequence, 37 residues long: Protamine Z3 (37 aa).

A disordered region spans residues 1-37; sequence ARSRSRRSYGRGRRRGGRRRRRRRRRRRGGRRGRRSR.

As to expression, testis.

Its subcellular location is the nucleus. It is found in the chromosome. In terms of biological role, protamines substitute for histones in the chromatin of sperm during the haploid phase of spermatogenesis. They compact sperm DNA into a highly condensed, stable and inactive complex. This is Protamine Z3 from Scyliorhinus canicula (Small-spotted catshark).